The sequence spans 171 residues: Mitochondrial import inner membrane translocase subunit Tim17-A (171 aa).

A disulfide bond links C9 and C78. 3 helical membrane-spanning segments follow: residues 17–37 (CGGA…IKGF), 63–77 (GGSF…SMID), and 113–133 (VGSA…GILL). The disordered stretch occupies residues 144–171 (GPQFAEDPSQLPSTQLPSSPFGDYRQYQ). Residues 151–163 (PSQLPSTQLPSSP) are compositionally biased toward low complexity.

The protein belongs to the Tim17/Tim22/Tim23 family. Component of the TIM23 complex at least composed of TIMM23, TIMM17 (TIMM17A or TIMM17B) and TIMM50. The complex interacts with the TIMM44 component of the PAM complex and with DNAJC15. In terms of processing, degraded by YMEL1 downstream of the integrated stress response (ISR).

The protein resides in the mitochondrion inner membrane. In terms of biological role, essential component of the TIM23 complex, a complex that mediates the translocation of transit peptide-containing proteins across the mitochondrial inner membrane. The polypeptide is Mitochondrial import inner membrane translocase subunit Tim17-A (TIMM17A) (Homo sapiens (Human)).